The primary structure comprises 101 residues: NAD(P)H-quinone oxidoreductase subunit 4L, chloroplastic (101 aa).

3 consecutive transmembrane segments (helical) span residues Ile-2–Ile-22, Met-32–Phe-52, and Ile-61–Val-81.

This sequence belongs to the complex I subunit 4L family. NDH is composed of at least 16 different subunits, 5 of which are encoded in the nucleus.

Its subcellular location is the plastid. It is found in the chloroplast thylakoid membrane. It carries out the reaction a plastoquinone + NADH + (n+1) H(+)(in) = a plastoquinol + NAD(+) + n H(+)(out). The enzyme catalyses a plastoquinone + NADPH + (n+1) H(+)(in) = a plastoquinol + NADP(+) + n H(+)(out). Functionally, NDH shuttles electrons from NAD(P)H:plastoquinone, via FMN and iron-sulfur (Fe-S) centers, to quinones in the photosynthetic chain and possibly in a chloroplast respiratory chain. The immediate electron acceptor for the enzyme in this species is believed to be plastoquinone. Couples the redox reaction to proton translocation, and thus conserves the redox energy in a proton gradient. The chain is NAD(P)H-quinone oxidoreductase subunit 4L, chloroplastic from Aethionema cordifolium (Lebanon stonecress).